We begin with the raw amino-acid sequence, 452 residues long: UPF0210 protein PTH_0987 (452 aa).

It belongs to the UPF0210 family. As to quaternary structure, homodimer.

The polypeptide is UPF0210 protein PTH_0987 (Pelotomaculum thermopropionicum (strain DSM 13744 / JCM 10971 / SI)).